Consider the following 182-residue polypeptide: Organic solute transporter subunit beta (182 aa).

The signal sequence occupies residues 1–20 (MSGLLKYLFGCFILCLLLQG). Over 21-64 (KTHMTSATISKPHETIDIEKQNMTGERNSTLAQQLSFPMEDPTN) the chain is Extracellular. 2 N-linked (GlcNAc...) asparagine glycosylation sites follow: asparagine 42 and asparagine 48. The chain crosses the membrane as a helical span at residues 65-85 (WNYAILALAFVVLFLAFLILA). Residues 86–182 (QNSRANRTRK…LYTDSKEDDV (97 aa)) lie on the Cytoplasmic side of the membrane.

The protein belongs to the OST-beta family. In terms of assembly, interacts with slc51a. The Ost-alpha/Ost-beta complex is a heterodimer composed of alpha (slc51a) and beta (slc51b) subunit; may induce the transport of slc51a from the endoplasmic reticulum to the plasma membrane. Expressed in liver.

The protein localises to the cell membrane. Functionally, essential component of the Ost-alpha/Ost-beta complex, a heterodimer that acts as the intestinal basolateral transporter responsible for bile acid export from enterocytes into portal blood. Efficiently transports the major species of bile acids. May modulate slc51a glycosylation, membrane trafficking and stability activities. Able to transport taurocholate, estrone sulfate, digoxin, and prostaglandin E(2), but not p-aminohippurate or S-dinitrophenyl glutathione. In Leucoraja erinaceus (Little skate), this protein is Organic solute transporter subunit beta (slc51b).